Here is a 422-residue protein sequence, read N- to C-terminus: Keratan-sulfate endo-1,4-beta-galactosidase (422 aa).

The N-terminal stretch at Met1–Leu46 is a signal peptide. Residues Asn47–Phe292 form the GH16 domain. The Nucleophile role is filled by Glu171. Catalysis depends on Glu176, which acts as the Proton donor. A CBM-cenC domain is found at Leu291–Lys406.

It belongs to the glycosyl hydrolase 16 family.

It localises to the secreted. It catalyses the reaction Endohydrolysis of (1-&gt;4)-beta-D-galactosidic linkages in keratan sulfate.. Functionally, hydrolyzes internal endo-beta-galactosyl linkages in keratan sulfate and in various neolacto-type glycosphingolipids, producing sulfated and non-sulfated disaccharides, and glucosylceramides respectivly. The chain is Keratan-sulfate endo-1,4-beta-galactosidase from Sphingobacterium multivorum.